A 676-amino-acid chain; its full sequence is Basic proline-rich protein (676 aa).

A signal peptide spans 1–16; that stretch reads MLPILLSVALLALSSA. S28 and S30 each carry phosphoserine. The segment at 29–676 is disordered; it reads NSAEKFLRPP…PRPPPGPPPQ (648 aa). Composition is skewed to pro residues over residues 36–50, 71–424, and 442–676; these read RPPPGGGPPRPPPPE, GPAP…PPAD, and PPPA…PPPQ. A propeptide spanning residues 409 to 457 is cleaved from the precursor; the sequence is APPGARPPPPPPPPADEPQQGPAPSGDKPKKKPPPPAGPPPPGPPSPGP.

As to expression, acinar cells and secretory granules of the parotid gland.

The protein localises to the secreted. Its function is as follows. The parotid hormone stimulates dentinal fluid transport in teeth. This Sus scrofa (Pig) protein is Basic proline-rich protein.